We begin with the raw amino-acid sequence, 711 residues long: Putative membrane protein ActII-3 (711 aa).

Transmembrane regions (helical) follow at residues leucine 14–glycine 34, alanine 175–tyrosine 195, leucine 199–valine 219, alanine 235–alanine 255, alanine 281–leucine 301, valine 313–phenylalanine 333, alanine 369–asparagine 389, isoleucine 516–valine 536, leucine 540–phenylalanine 560, phenylalanine 573–valine 593, alanine 623–alanine 643, and leucine 645–valine 665. A disordered region spans residues arginine 685–arginine 711.

Belongs to the resistance-nodulation-cell division (RND) (TC 2.A.6) family. MmpL subfamily.

It localises to the cell membrane. The chain is Putative membrane protein ActII-3 (actII-3) from Streptomyces coelicolor (strain ATCC BAA-471 / A3(2) / M145).